The following is a 449-amino-acid chain: Tubulin alpha chain (449 aa).

The MREC motif signature appears at 1 to 4 (MREC). A GTP-binding site is contributed by Gln-11. At Lys-40 the chain carries N6-acetyllysine. Positions 71, 140, 144, 145, 179, 206, and 228 each coordinate GTP. Glu-71 serves as a coordination point for Mg(2+). The active site involves Glu-254. Glu-443 carries the post-translational modification 5-glutamyl polyglutamate.

This sequence belongs to the tubulin family. As to quaternary structure, dimer of alpha and beta chains. A typical microtubule is a hollow water-filled tube with an outer diameter of 25 nm and an inner diameter of 15 nM. Alpha-beta heterodimers associate head-to-tail to form protofilaments running lengthwise along the microtubule wall with the beta-tubulin subunit facing the microtubule plus end conferring a structural polarity. Microtubules usually have 13 protofilaments but different protofilament numbers can be found in some organisms and specialized cells. Requires Mg(2+) as cofactor. In terms of processing, some glutamate residues at the C-terminus are polyglycylated, resulting in polyglycine chains on the gamma-carboxyl group. Glycylation is mainly limited to tubulin incorporated into axonemes (cilia and flagella) whereas glutamylation is prevalent in neuronal cells, centrioles, axonemes, and the mitotic spindle. Both modifications can coexist on the same protein on adjacent residues, and lowering polyglycylation levels increases polyglutamylation, and reciprocally. The precise function of polyglycylation is still unclear. Some glutamate residues at the C-terminus are polyglutamylated, resulting in polyglutamate chains on the gamma-carboxyl group. Polyglutamylation plays a key role in microtubule severing by spastin (SPAST). SPAST preferentially recognizes and acts on microtubules decorated with short polyglutamate tails: severing activity by SPAST increases as the number of glutamates per tubulin rises from one to eight, but decreases beyond this glutamylation threshold. Post-translationally, acetylation of alpha chains at Lys-40 is located inside the microtubule lumen. This modification has been correlated with increased microtubule stability, intracellular transport and ciliary assembly. In terms of processing, undergoes a tyrosination/detyrosination cycle, the cyclic removal and re-addition of a C-terminal tyrosine residue by the enzymes tubulin tyrosine carboxypeptidase (MATCAP1, VASH1 or VASH2) and tubulin tyrosine ligase (TTL), respectively. Tyrosination promotes microtubule interaction with CAP-Gly microtubule plus-end tracking proteins. Tyrosinated tubulins regulate the initiation of dynein-driven motility. Post-translationally, detyrosination is involved in metaphase plate congression by guiding chromosomes during mitosis. Detyrosination increases microtubules-dependent mechanotransduction in dystrophic cardiac and skeletal muscle. In cardiomyocytes, detyrosinated microtubules are required to resist to contractile compression during contraction.

The protein localises to the cytoplasm. Its subcellular location is the cytoskeleton. It carries out the reaction GTP + H2O = GDP + phosphate + H(+). Tubulin is the major constituent of microtubules, a cylinder consisting of laterally associated linear protofilaments composed of alpha- and beta-tubulin heterodimers. Microtubules grow by the addition of GTP-tubulin dimers to the microtubule end, where a stabilizing cap forms. Below the cap, tubulin dimers are in GDP-bound state, owing to GTPase activity of alpha-tubulin. The protein is Tubulin alpha chain (tuba) of Xenopus tropicalis (Western clawed frog).